The following is a 529-amino-acid chain: Bifunctional purine biosynthesis protein PurH (529 aa).

The MGS-like domain occupies 1–148; the sequence is MQQRRPVRRA…KNHKDVAIVV (148 aa). At lysine 287 the chain carries N6-acetyllysine.

The protein belongs to the PurH family.

The enzyme catalyses (6R)-10-formyltetrahydrofolate + 5-amino-1-(5-phospho-beta-D-ribosyl)imidazole-4-carboxamide = 5-formamido-1-(5-phospho-D-ribosyl)imidazole-4-carboxamide + (6S)-5,6,7,8-tetrahydrofolate. The catalysed reaction is IMP + H2O = 5-formamido-1-(5-phospho-D-ribosyl)imidazole-4-carboxamide. It functions in the pathway purine metabolism; IMP biosynthesis via de novo pathway; 5-formamido-1-(5-phospho-D-ribosyl)imidazole-4-carboxamide from 5-amino-1-(5-phospho-D-ribosyl)imidazole-4-carboxamide (10-formyl THF route): step 1/1. Its pathway is purine metabolism; IMP biosynthesis via de novo pathway; IMP from 5-formamido-1-(5-phospho-D-ribosyl)imidazole-4-carboxamide: step 1/1. The sequence is that of Bifunctional purine biosynthesis protein PurH from Escherichia coli (strain 55989 / EAEC).